Consider the following 314-residue polypeptide: Ketimine reductase mu-crystallin (314 aa).

A 3,3',5-triiodo-L-thyronine-binding site is contributed by Arg-47. Residues Ser-91, His-92, Arg-119, Ala-144, Val-146, Gln-147, Asn-168, Arg-169, Thr-170, Asn-173, Thr-205, Met-206, and Val-226 each contribute to the NADPH site. A 3,3',5-triiodo-L-thyronine-binding site is contributed by Glu-257. Ser-292 is a binding site for NADPH.

It belongs to the ornithine cyclodeaminase/mu-crystallin family. Homodimer. Binds the thyroid hormone triiodothyronine (T3); T3 binding inhibits enzymatic activity. In terms of tissue distribution, expressed at high abundance in lens, but outside the lens it is preferentially expressed in neural tissues, retina and brain.

The protein resides in the cytoplasm. It catalyses the reaction L-pipecolate + NADP(+) = Delta(1)-piperideine-2-carboxylate + NADPH + H(+). The catalysed reaction is L-pipecolate + NAD(+) = Delta(1)-piperideine-2-carboxylate + NADH + H(+). It carries out the reaction L-proline + NADP(+) = 1-pyrroline-2-carboxylate + NADPH + H(+). The enzyme catalyses L-proline + NAD(+) = 1-pyrroline-2-carboxylate + NADH + H(+). It catalyses the reaction (3R)-1,4-thiomorpholine-3-carboxylate + NAD(+) = 3,4-dehydrothiomorpholine-3-carboxylate + NADH + 2 H(+). The catalysed reaction is (3R)-1,4-thiomorpholine-3-carboxylate + NADP(+) = 3,4-dehydrothiomorpholine-3-carboxylate + NADPH + 2 H(+). It carries out the reaction (S)-cystathionine ketimine + NADH + 2 H(+) = (3R,5S)-2,3,5,6,7-pentahydro-1,4-thiazepine-3,5-dicarboxylate + NAD(+). The enzyme catalyses (S)-cystathionine ketimine + NADPH + 2 H(+) = (3R,5S)-2,3,5,6,7-pentahydro-1,4-thiazepine-3,5-dicarboxylate + NADP(+). It catalyses the reaction (R)-lanthionine ketimine + NADPH + 2 H(+) = (3R,5R)-1,4-thiomorpholine-3,5-dicarboxylate + NADP(+). The catalysed reaction is Delta(2)-thiazoline-2-carboxylate + NADPH + 2 H(+) = L-thiazolidine-2-carboxylate + NADP(+). Functionally, catalyzes the NAD(P)H-dependent reduction of imine double bonds of a number of cyclic ketimine substrates, including sulfur-containing cyclic ketimines. Under physiological conditions, it efficiently catalyzes delta(1)-piperideine-2-carboxylate (P2C) and delta(1)-pyrroline-2-carboxylate (Pyr2C) reduction, suggesting a central role in lysine and glutamate metabolism. Additional substrates are delta(2)-thiazoline-2-carboxylate (T2C), 3,4-dehydrothiomorpholine-3-carboxylate (AECK), and (R)-lanthionine ketimine (LK) that is reduced at very low rate compared to other substrates. Also catalyzes the NAD(P)H-dependent reduction of (S)-cystathionine ketimine (CysK). The protein is Ketimine reductase mu-crystallin (CRYM) of Macropus fuliginosus (Western gray kangaroo).